A 386-amino-acid polypeptide reads, in one-letter code: ATP phosphoribosyltransferase regulatory subunit (386 aa).

The protein belongs to the class-II aminoacyl-tRNA synthetase family. HisZ subfamily. As to quaternary structure, heteromultimer composed of HisG and HisZ subunits.

It localises to the cytoplasm. It functions in the pathway amino-acid biosynthesis; L-histidine biosynthesis; L-histidine from 5-phospho-alpha-D-ribose 1-diphosphate: step 1/9. Its function is as follows. Required for the first step of histidine biosynthesis. May allow the feedback regulation of ATP phosphoribosyltransferase activity by histidine. This is ATP phosphoribosyltransferase regulatory subunit from Limosilactobacillus fermentum (strain NBRC 3956 / LMG 18251) (Lactobacillus fermentum).